A 389-amino-acid polypeptide reads, in one-letter code: Acetate kinase (389 aa).

Asn-7 contacts Mg(2+). ATP is bound at residue Lys-14. Position 88 (Arg-88) interacts with substrate. Asp-145 acts as the Proton donor/acceptor in catalysis. ATP is bound by residues 205-209 (HLGNG), 279-281 (DLR), and 324-328 (GIGEN). A Mg(2+)-binding site is contributed by Glu-375.

Belongs to the acetokinase family. In terms of assembly, homodimer. It depends on Mg(2+) as a cofactor. Mn(2+) is required as a cofactor.

The protein localises to the cytoplasm. The catalysed reaction is acetate + ATP = acetyl phosphate + ADP. It participates in metabolic intermediate biosynthesis; acetyl-CoA biosynthesis; acetyl-CoA from acetate: step 1/2. Its function is as follows. Catalyzes the formation of acetyl phosphate from acetate and ATP. Can also catalyze the reverse reaction. In Sulfurimonas denitrificans (strain ATCC 33889 / DSM 1251) (Thiomicrospira denitrificans (strain ATCC 33889 / DSM 1251)), this protein is Acetate kinase.